A 58-amino-acid chain; its full sequence is Small ribosomal subunit protein bS21 (58 aa).

Positions 25-58 (SKSGTLQEYRKREHYEKPSVKRKKKSEAARKRKF) are disordered. Over residues 32-43 (EYRKREHYEKPS) the composition is skewed to basic and acidic residues. Basic residues predominate over residues 44–58 (VKRKKKSEAARKRKF).

This sequence belongs to the bacterial ribosomal protein bS21 family.

This chain is Small ribosomal subunit protein bS21, found in Oceanobacillus iheyensis (strain DSM 14371 / CIP 107618 / JCM 11309 / KCTC 3954 / HTE831).